A 631-amino-acid polypeptide reads, in one-letter code: Chaperone protein HtpG (631 aa).

Positions 1–342 (MSEQTANKET…SNDLPLNVSR (342 aa)) are a; substrate-binding. The tract at residues 343–559 (EILQDNKVTQ…DFEMGTQMAK (217 aa)) is b. A c region spans residues 560 to 631 (LLEAAGQAAP…LSAMNQLLAK (72 aa)).

Belongs to the heat shock protein 90 family. As to quaternary structure, homodimer.

The protein resides in the cytoplasm. In terms of biological role, molecular chaperone. Has ATPase activity. The chain is Chaperone protein HtpG from Aliivibrio fischeri (strain ATCC 700601 / ES114) (Vibrio fischeri).